A 325-amino-acid chain; its full sequence is Small ribosomal subunit protein uS3 (325 aa).

A KH type-2 domain is found at 38 to 106 (IRKMMSKGME…QVQLNILEVK (69 aa)). The interval 217-325 (EALLRQQRRE…AQGAPEKAEG (109 aa)) is disordered. Basic residues predominate over residues 222 to 232 (QQRRERPRRGP). The span at 285–316 (TESAAVEGTPVETPAVTPETTAAPAAVTTAEA) shows a compositional bias: low complexity.

It belongs to the universal ribosomal protein uS3 family. Part of the 30S ribosomal subunit. Forms a tight complex with proteins S10 and S14.

Its function is as follows. Binds the lower part of the 30S subunit head. Binds mRNA in the 70S ribosome, positioning it for translation. The chain is Small ribosomal subunit protein uS3 from Parafrankia sp. (strain EAN1pec).